The primary structure comprises 178 residues: Interleukin-10 (178 aa).

Positions 1–18 (MHSSALLCCLVFLAGVAA) are cleaved as a signal peptide. Intrachain disulfides connect C30–C126 and C80–C132. N134 carries N-linked (GlcNAc...) asparagine glycosylation.

Belongs to the IL-10 family. As to quaternary structure, homodimer. Interacts with IL10RA and IL10RB.

The protein resides in the secreted. Major immune regulatory cytokine that acts on many cells of the immune system where it has profound anti-inflammatory functions, limiting excessive tissue disruption caused by inflammation. Mechanistically, IL10 binds to its heterotetrameric receptor comprising IL10RA and IL10RB leading to JAK1 and STAT2-mediated phosphorylation of STAT3. In turn, STAT3 translocates to the nucleus where it drives expression of anti-inflammatory mediators. Targets antigen-presenting cells (APCs) such as macrophages and monocytes and inhibits their release of pro-inflammatory cytokines including granulocyte-macrophage colony-stimulating factor /GM-CSF, granulocyte colony-stimulating factor/G-CSF, IL-1 alpha, IL-1 beta, IL-6, IL-8 and TNF-alpha. Also interferes with antigen presentation by reducing the expression of MHC-class II and co-stimulatory molecules, thereby inhibiting their ability to induce T cell activation. In addition, controls the inflammatory response of macrophages by reprogramming essential metabolic pathways including mTOR signaling. This is Interleukin-10 (IL10) from Bos taurus (Bovine).